The primary structure comprises 190 residues: Imidazoleglycerol-phosphate dehydratase (190 aa).

Belongs to the imidazoleglycerol-phosphate dehydratase family.

It localises to the cytoplasm. The catalysed reaction is D-erythro-1-(imidazol-4-yl)glycerol 3-phosphate = 3-(imidazol-4-yl)-2-oxopropyl phosphate + H2O. It participates in amino-acid biosynthesis; L-histidine biosynthesis; L-histidine from 5-phospho-alpha-D-ribose 1-diphosphate: step 6/9. The chain is Imidazoleglycerol-phosphate dehydratase from Aliarcobacter butzleri (strain RM4018) (Arcobacter butzleri).